The primary structure comprises 1178 residues: DNA-directed RNA polymerase subunit beta' (1178 aa).

Positions 60, 62, 75, and 78 each coordinate Zn(2+). Mg(2+) is bound by residues aspartate 450, aspartate 452, and aspartate 454. The Zn(2+) site is built by cysteine 795, cysteine 869, cysteine 876, and cysteine 879.

The protein belongs to the RNA polymerase beta' chain family. The RNAP catalytic core consists of 2 alpha, 1 beta, 1 beta' and 1 omega subunit. When a sigma factor is associated with the core the holoenzyme is formed, which can initiate transcription. Requires Mg(2+) as cofactor. Zn(2+) is required as a cofactor.

It carries out the reaction RNA(n) + a ribonucleoside 5'-triphosphate = RNA(n+1) + diphosphate. Its function is as follows. DNA-dependent RNA polymerase catalyzes the transcription of DNA into RNA using the four ribonucleoside triphosphates as substrates. This Clostridium perfringens (strain ATCC 13124 / DSM 756 / JCM 1290 / NCIMB 6125 / NCTC 8237 / Type A) protein is DNA-directed RNA polymerase subunit beta'.